A 219-amino-acid chain; its full sequence is UPF0319 protein MS0844 (219 aa).

The signal sequence occupies residues 1–21; sequence MKFRLTALAVAALLTSTASFA.

This sequence belongs to the UPF0319 family.

This chain is UPF0319 protein MS0844, found in Mannheimia succiniciproducens (strain KCTC 0769BP / MBEL55E).